The chain runs to 316 residues: Pantothenate kinase (316 aa).

95–102 (GSVAVGKS) provides a ligand contact to ATP.

This sequence belongs to the prokaryotic pantothenate kinase family.

It localises to the cytoplasm. It carries out the reaction (R)-pantothenate + ATP = (R)-4'-phosphopantothenate + ADP + H(+). It participates in cofactor biosynthesis; coenzyme A biosynthesis; CoA from (R)-pantothenate: step 1/5. This is Pantothenate kinase from Yersinia pseudotuberculosis serotype O:3 (strain YPIII).